Here is a 193-residue protein sequence, read N- to C-terminus: Glycerol-3-phosphate acyltransferase (193 aa).

The next 4 helical transmembrane spans lie at 2–22, 76–96, 112–132, and 152–172; these read LIALLIILAYVIGSIPSGLIV, VPIHPLLAGVAAVIGHVFPVF, LLFYAPLLFVTMVAVFFVFLF, and CLFVKDPYLLVVVTLLTAFVI.

This sequence belongs to the PlsY family. Probably interacts with PlsX.

It is found in the cell membrane. It carries out the reaction an acyl phosphate + sn-glycerol 3-phosphate = a 1-acyl-sn-glycero-3-phosphate + phosphate. Its pathway is lipid metabolism; phospholipid metabolism. Functionally, catalyzes the transfer of an acyl group from acyl-phosphate (acyl-PO(4)) to glycerol-3-phosphate (G3P) to form lysophosphatidic acid (LPA). This enzyme utilizes acyl-phosphate as fatty acyl donor, but not acyl-CoA or acyl-ACP. The sequence is that of Glycerol-3-phosphate acyltransferase from Bacillus velezensis (strain DSM 23117 / BGSC 10A6 / LMG 26770 / FZB42) (Bacillus amyloliquefaciens subsp. plantarum).